A 479-amino-acid polypeptide reads, in one-letter code: UDP-N-acetylmuramate--L-alanine ligase (479 aa).

128 to 134 provides a ligand contact to ATP; it reads GAHGKTT.

It belongs to the MurCDEF family.

It localises to the cytoplasm. It carries out the reaction UDP-N-acetyl-alpha-D-muramate + L-alanine + ATP = UDP-N-acetyl-alpha-D-muramoyl-L-alanine + ADP + phosphate + H(+). It participates in cell wall biogenesis; peptidoglycan biosynthesis. Cell wall formation. The chain is UDP-N-acetylmuramate--L-alanine ligase from Psychrobacter cryohalolentis (strain ATCC BAA-1226 / DSM 17306 / VKM B-2378 / K5).